Consider the following 32-residue polypeptide: Calcitonin (32 aa).

Residues Cys-1 and Cys-7 are joined by a disulfide bond. Pro-32 bears the Proline amide mark.

The protein belongs to the calcitonin family.

Its subcellular location is the secreted. In terms of biological role, calcitonin is a peptide hormone that causes a rapid but short-lived drop in the level of calcium and phosphate in blood by promoting the incorporation of those ions in the bones. Calcitonin function is mediated by the calcitonin receptor/CALCR and the CALCR-RAMP2 (AMYR2) receptor complex. The chain is Calcitonin (CALCA) from Sus scrofa (Pig).